The sequence spans 693 residues: Heat shock protein homolog SSE2 (693 aa).

Residues 653–693 are disordered; sequence LRANQETSKMNDIAEKLAEQRRARAASDDSDDNNDENMDLD. Positions 664–679 are enriched in basic and acidic residues; it reads DIAEKLAEQRRARAAS. A compositionally biased stretch (acidic residues) spans 680–693; the sequence is DDSDDNNDENMDLD.

This sequence belongs to the heat shock protein 70 family.

Functionally, has a calcium-dependent calmodulin-binding activity. In Saccharomyces cerevisiae (strain ATCC 204508 / S288c) (Baker's yeast), this protein is Heat shock protein homolog SSE2 (SSE2).